The chain runs to 605 residues: IQ domain-containing protein IQM2 (605 aa).

Positions 105-134 constitute an IQ domain; sequence KHEAAIKLQKVYKSFRTRRKLADCAVLVEQ. The segment at 408–505 is disordered; it reads QDKVDPSGEE…EEGETKESEV (98 aa). A compositionally biased stretch (basic and acidic residues) spans 425–440; the sequence is SISRKQSDLETPEKME. Acidic residues predominate over residues 462-480; it reads DYDSGDDEEEEEEMFELEQ. The span at 481–490 shows a compositional bias: low complexity; it reads ESMPSEQSSP. Residues 491-505 are compositionally biased toward basic and acidic residues; the sequence is RGEEKEEGETKESEV.

In terms of tissue distribution, expressed in rosette and cauline leaves, stems, flowers and siliques, and at lower levels in roots.

The protein resides in the cytoplasm. Its subcellular location is the nucleus. May be involved in biotic and abiotic stress responses. The chain is IQ domain-containing protein IQM2 from Arabidopsis thaliana (Mouse-ear cress).